The chain runs to 252 residues: Chitooligosaccharide deacetylase (252 aa).

The Mg(2+) site is built by His-61 and His-125.

This sequence belongs to the YdjC deacetylase family. ChbG subfamily. Homodimer. Requires Mg(2+) as cofactor.

It localises to the cytoplasm. The enzyme catalyses N,N'-diacetylchitobiose + H2O = N-acetyl-beta-D-glucosaminyl-(1-&gt;4)-D-glucosamine + acetate. The catalysed reaction is diacetylchitobiose-6'-phosphate + H2O = N'-monoacetylchitobiose-6'-phosphate + acetate. Its pathway is glycan degradation; chitin degradation. Functionally, involved in the degradation of chitin. ChbG is essential for growth on the acetylated chitooligosaccharides chitobiose and chitotriose but is dispensable for growth on cellobiose and chitosan dimer, the deacetylated form of chitobiose. Deacetylation of chitobiose-6-P and chitotriose-6-P is necessary for both the activation of the chb promoter by the regulatory protein ChbR and the hydrolysis of phosphorylated beta-glucosides by the phospho-beta-glucosidase ChbF. Catalyzes the removal of only one acetyl group from chitobiose-6-P to yield monoacetylchitobiose-6-P, the inducer of ChbR and the substrate of ChbF. The protein is Chitooligosaccharide deacetylase of Salmonella typhimurium (strain LT2 / SGSC1412 / ATCC 700720).